Reading from the N-terminus, the 167-residue chain is Thioredoxin Y2, chloroplastic (167 aa).

Residues 1 to 58 (MAISLATAYISPCFTPESSNSASPSRTLSSVRLPSQIRRFGSVQSPSSSTRFAPLTVR) constitute a chloroplast transit peptide. In terms of domain architecture, Thioredoxin spans 59 to 164 (AAKKQTFNSF…LVERIENSLQ (106 aa)). Residues C88 and C91 each act as nucleophile in the active site. Cysteines 88 and 91 form a disulfide.

It belongs to the thioredoxin family. Plant Y-type subfamily. In terms of tissue distribution, expressed in leaves.

The protein resides in the plastid. Its subcellular location is the chloroplast stroma. Functionally, thiol-disulfide oxidoreductase that poorly activates chloroplastic malate dehydrogenase (NADP-MDH) and fructose-1,6-bisphosphatase. Provides reducing equivalents for peroxiredoxin Q. This chain is Thioredoxin Y2, chloroplastic, found in Arabidopsis thaliana (Mouse-ear cress).